We begin with the raw amino-acid sequence, 500 residues long: Aromatic-L-amino-acid decarboxylase (500 aa).

Pro102 contacts L-tryptophan. Ser168 contacts pyridoxal 5'-phosphate. His203 is a binding site for L-tryptophan. Residue Thr262 coordinates pyridoxal 5'-phosphate. His318 contacts L-tryptophan. An N6-(pyridoxal phosphate)lysine modification is found at Lys319. Residue Tyr348 participates in L-tryptophan binding.

It belongs to the group II decarboxylase family. As to quaternary structure, homodimer. It depends on pyridoxal 5'-phosphate as a cofactor.

The catalysed reaction is L-tryptophan + H(+) = tryptamine + CO2. It catalyses the reaction 5-hydroxy-L-tryptophan + H(+) = serotonin + CO2. Its function is as follows. Catalyzes the decarboxylation of L-tryptophan to tryptamine and L-5-hydroxytryptophan to serotonin, respectively. The chain is Aromatic-L-amino-acid decarboxylase from Catharanthus roseus (Madagascar periwinkle).